Reading from the N-terminus, the 745-residue chain is Phosphoribosylformylglycinamidine synthase subunit PurL (745 aa).

His47 is an active-site residue. Tyr50 and Lys90 together coordinate ATP. Glu92 contacts Mg(2+). Substrate-binding positions include 93-96 (SHNH) and Arg115. His94 serves as the catalytic Proton acceptor. Mg(2+) is bound at residue Asp116. Gln240 lines the substrate pocket. Asp268 contacts Mg(2+). 312 to 314 (ESQ) is a substrate binding site. Residues Asn501 and Gly538 each contribute to the ATP site. Asn539 is a Mg(2+) binding site. Ser541 contributes to the substrate binding site.

This sequence belongs to the FGAMS family. Monomer. Part of the FGAM synthase complex composed of 1 PurL, 1 PurQ and 2 PurS subunits.

The protein resides in the cytoplasm. It catalyses the reaction N(2)-formyl-N(1)-(5-phospho-beta-D-ribosyl)glycinamide + L-glutamine + ATP + H2O = 2-formamido-N(1)-(5-O-phospho-beta-D-ribosyl)acetamidine + L-glutamate + ADP + phosphate + H(+). It participates in purine metabolism; IMP biosynthesis via de novo pathway; 5-amino-1-(5-phospho-D-ribosyl)imidazole from N(2)-formyl-N(1)-(5-phospho-D-ribosyl)glycinamide: step 1/2. Functionally, part of the phosphoribosylformylglycinamidine synthase complex involved in the purines biosynthetic pathway. Catalyzes the ATP-dependent conversion of formylglycinamide ribonucleotide (FGAR) and glutamine to yield formylglycinamidine ribonucleotide (FGAM) and glutamate. The FGAM synthase complex is composed of three subunits. PurQ produces an ammonia molecule by converting glutamine to glutamate. PurL transfers the ammonia molecule to FGAR to form FGAM in an ATP-dependent manner. PurS interacts with PurQ and PurL and is thought to assist in the transfer of the ammonia molecule from PurQ to PurL. The protein is Phosphoribosylformylglycinamidine synthase subunit PurL of Leptospira interrogans serogroup Icterohaemorrhagiae serovar copenhageni (strain Fiocruz L1-130).